The chain runs to 97 residues: MAQGAGKSIKAKGKSGGSQRKNTGKTKPGKREVAPKDRQRVLERSQKKQLSSKINNSIEKQMVQAASVGKLSIMRNVGELESGEGKDGKAKGKGKSR.

2 disordered regions span residues 1–57 and 75–97; these read MAQG…INNS and RNVG…GKSR. Over residues 29–46 the composition is skewed to basic and acidic residues; the sequence is GKREVAPKDRQRVLERSQ. Residues 48 to 57 are compositionally biased toward polar residues; that stretch reads KQLSSKINNS.

This sequence belongs to the UPF0390 family.

This chain is UPF0390 protein CNBD1430, found in Cryptococcus neoformans var. neoformans serotype D (strain B-3501A) (Filobasidiella neoformans).